The following is a 514-amino-acid chain: Transcription termination factor Rho (514 aa).

A disordered region spans residues 25–52 (EPSSTPGPARNARRSNRRMRHPDKDVDK). The segment covering 35 to 45 (NARRSNRRMRH) has biased composition (basic residues). In terms of domain architecture, Rho RNA-BD spans 141–216 (LMYGEGTLEI…LRIEAINHAD (76 aa)). ATP is bound by residues 259–264 (GFGQRG), 271–276 (RAGKTM), and R302.

This sequence belongs to the Rho family. Homohexamer. The homohexamer assembles into an open ring structure.

In terms of biological role, facilitates transcription termination by a mechanism that involves Rho binding to the nascent RNA, activation of Rho's RNA-dependent ATPase activity, and release of the mRNA from the DNA template. This Rhodopirellula baltica (strain DSM 10527 / NCIMB 13988 / SH1) protein is Transcription termination factor Rho.